A 348-amino-acid polypeptide reads, in one-letter code: Lipoyl synthase, mitochondrial (348 aa).

Residues cysteine 105, cysteine 110, cysteine 116, cysteine 136, cysteine 140, and cysteine 143 each contribute to the [4Fe-4S] cluster site. Residues 121-341 (ETGTATATIM…RTXXLVSYVL (221 aa)) form the Radical SAM core domain.

Belongs to the radical SAM superfamily. Lipoyl synthase family. The cofactor is [4Fe-4S] cluster.

The protein resides in the mitochondrion. The enzyme catalyses [[Fe-S] cluster scaffold protein carrying a second [4Fe-4S](2+) cluster] + N(6)-octanoyl-L-lysyl-[protein] + 2 oxidized [2Fe-2S]-[ferredoxin] + 2 S-adenosyl-L-methionine + 4 H(+) = [[Fe-S] cluster scaffold protein] + N(6)-[(R)-dihydrolipoyl]-L-lysyl-[protein] + 4 Fe(3+) + 2 hydrogen sulfide + 2 5'-deoxyadenosine + 2 L-methionine + 2 reduced [2Fe-2S]-[ferredoxin]. It participates in protein modification; protein lipoylation via endogenous pathway; protein N(6)-(lipoyl)lysine from octanoyl-[acyl-carrier-protein]: step 2/2. Catalyzes the radical-mediated insertion of two sulfur atoms into the C-6 and C-8 positions of the octanoyl moiety bound to the lipoyl domains of lipoate-dependent enzymes, thereby converting the octanoylated domains into lipoylated derivatives. The chain is Lipoyl synthase, mitochondrial (LIP1) from Ricinus communis (Castor bean).